A 187-amino-acid chain; its full sequence is Protein GrpE (187 aa).

A compositionally biased stretch (low complexity) spans 1-17; sequence MSNEEQQQPNPAAQAPE. The segment at 1–27 is disordered; that stretch reads MSNEEQQQPNPAAQAPEGAVTEGAAPE.

Belongs to the GrpE family. As to quaternary structure, homodimer.

The protein localises to the cytoplasm. In terms of biological role, participates actively in the response to hyperosmotic and heat shock by preventing the aggregation of stress-denatured proteins, in association with DnaK and GrpE. It is the nucleotide exchange factor for DnaK and may function as a thermosensor. Unfolded proteins bind initially to DnaJ; upon interaction with the DnaJ-bound protein, DnaK hydrolyzes its bound ATP, resulting in the formation of a stable complex. GrpE releases ADP from DnaK; ATP binding to DnaK triggers the release of the substrate protein, thus completing the reaction cycle. Several rounds of ATP-dependent interactions between DnaJ, DnaK and GrpE are required for fully efficient folding. The polypeptide is Protein GrpE (Thioalkalivibrio sulfidiphilus (strain HL-EbGR7)).